Here is a 179-residue protein sequence, read N- to C-terminus: MNRLKEKFQKEITPALVSKFNYKSVMQVPKIEKIVINTGVGDAVSNSKTLDNAVEELTQITGQKPVVTRAKKSIAGFRLREGMPIGAKVTLRGEQMYEFFDKLVSVSLPRVRDFRGVSKKSFDGRGNYTLGVKEQLIFPEIDYDKVSKVRGMDIVIVTTAKTDEEARELLTQFGMPFQK.

Belongs to the universal ribosomal protein uL5 family. In terms of assembly, part of the 50S ribosomal subunit; part of the 5S rRNA/L5/L18/L25 subcomplex. Contacts the 5S rRNA and the P site tRNA. Forms a bridge to the 30S subunit in the 70S ribosome.

This is one of the proteins that bind and probably mediate the attachment of the 5S RNA into the large ribosomal subunit, where it forms part of the central protuberance. In the 70S ribosome it contacts protein S13 of the 30S subunit (bridge B1b), connecting the 2 subunits; this bridge is implicated in subunit movement. Contacts the P site tRNA; the 5S rRNA and some of its associated proteins might help stabilize positioning of ribosome-bound tRNAs. In Bacillus anthracis (strain A0248), this protein is Large ribosomal subunit protein uL5.